A 55-amino-acid chain; its full sequence is Large ribosomal subunit protein bL33 (55 aa).

Belongs to the bacterial ribosomal protein bL33 family.

The chain is Large ribosomal subunit protein bL33 from Buchnera aphidicola subsp. Baizongia pistaciae (strain Bp).